The following is a 166-amino-acid chain: NAD(P)H-quinone oxidoreductase subunit I, chloroplastic (166 aa).

4Fe-4S ferredoxin-type domains lie at glycine 55 to lysine 84 and leucine 95 to glutamate 124. The [4Fe-4S] cluster site is built by cysteine 64, cysteine 67, cysteine 70, cysteine 74, cysteine 104, cysteine 107, cysteine 110, and cysteine 114.

Belongs to the complex I 23 kDa subunit family. As to quaternary structure, NDH is composed of at least 16 different subunits, 5 of which are encoded in the nucleus. [4Fe-4S] cluster serves as cofactor.

It localises to the plastid. Its subcellular location is the chloroplast thylakoid membrane. It catalyses the reaction a plastoquinone + NADH + (n+1) H(+)(in) = a plastoquinol + NAD(+) + n H(+)(out). The catalysed reaction is a plastoquinone + NADPH + (n+1) H(+)(in) = a plastoquinol + NADP(+) + n H(+)(out). In terms of biological role, NDH shuttles electrons from NAD(P)H:plastoquinone, via FMN and iron-sulfur (Fe-S) centers, to quinones in the photosynthetic chain and possibly in a chloroplast respiratory chain. The immediate electron acceptor for the enzyme in this species is believed to be plastoquinone. Couples the redox reaction to proton translocation, and thus conserves the redox energy in a proton gradient. This Calea megacephala protein is NAD(P)H-quinone oxidoreductase subunit I, chloroplastic.